Here is a 281-residue protein sequence, read N- to C-terminus: tRNA pseudouridine synthase A (281 aa).

The active-site Nucleophile is Asp-55. Residue Tyr-110 coordinates substrate.

This sequence belongs to the tRNA pseudouridine synthase TruA family.

The catalysed reaction is uridine(38/39/40) in tRNA = pseudouridine(38/39/40) in tRNA. Its function is as follows. Formation of pseudouridine at positions 38, 39 and 40 in the anticodon stem and loop of transfer RNAs. The polypeptide is tRNA pseudouridine synthase A (Methanocorpusculum labreanum (strain ATCC 43576 / DSM 4855 / Z)).